Here is a 317-residue protein sequence, read N- to C-terminus: Orange carotenoid-binding protein (317 aa).

An OCP N-terminal domain is found at 18–169 (ADVVPATIAR…DMGFTAGKDG (152 aa)). Echinenone is bound by residues 34–38 (EDQLA), 37–44 (LALIWFAY), 80–83 (TQAM), 107–117 (LGFWYRLGELM), 125–129 (IPAGY), 151–161 (ITVLRNAVVDM), Tyr-201, 245–250 (CQNLKL), 273–284 (VQTPWFGGNVGM), and Trp-288.

Belongs to the orange carotenoid-binding protein family. As to quaternary structure, monomer. Interacts with the APC core of the phycobilisome (PB), probably at a ratio of 1:1 in a light-independent manner; possibly only OCP-R binds to PBs. Interacts with FRP. Detachment from PBs is accelerated by FPR. It depends on 3'-hydroxyechinenone as a cofactor. Proteolytically cleaved into a red 16.7 kDa form named red carotenoid-binding protein (RCP) which lacks 15 residues from the N-terminus and approximately 150 residues from the C-terminus.

The protein resides in the cellular thylakoid membrane. Functionally, acts as a blue-light photoreceptor and photo-protectant. Essential for inhibiting damaged induced by excess blue-green light via a process known as non-photochemical quenching (NPQ). In the dark or dim light the stable inactive form (OCP-O) is orange, upon illumination with blue-green light it converts to a metastable active red form (OCP-R), inducing energy dissipation, quenching cellular fluorescence via NPQ. One OCP-R molecule is sufficient to quench 1 phycobilisome. More OCP-R accumulates under high-light and low temperature; in the dark OCP-R spontaneously reverts to OCP-O. Reversion of OCP-O is accelerated by FRP. A kinetic study suggests conversion of OCP-O to OCP-R is limited by cis-trans proline isomerization of either Gln224-Pro225 or Pro225-Pro226. The sequence is that of Orange carotenoid-binding protein from Synechocystis sp. (strain ATCC 27184 / PCC 6803 / Kazusa).